Reading from the N-terminus, the 1292-residue chain is MTEEPKPVTPVLRDGEAGLDTTAPTEAGSLGEEAPKKEADGIVDVPDAEQQKQEAPQQGFSAYVKLWAWCEPIDVVLRICGFFAAVASGTALPLMTIIFGKFVNIFNDFGVGKISGDDFRAQISKNALWFVYLFIGKFALVYIHTICFNITAIRSVRKLRLQYIRAILRQEMAYFDTYTPGSVATRISNNANLIQTGMSEKVGTCCQGVAMLISAFVVAFTQSWRLTLPVATSIPTAVTLVGITVALDAKLEAKILDIYSKAGGLVEETLGSIRVVVAFGAGDRLSKKYDNHLEAAKGFGVKKGPVLGIQYSSEFFIMYCAYALAFWYGIKLLLQGKIGSGGDILTVLFSIVIGTSSLTMIAPTLGEFTKAGAAANDVLNMINRVPEIDSLSAEGLKPSSVKGDLELSNAVFSYPARPTIRVLDGVNLKIPARKVTALVGASGSGKSTIIGLLERWYDPASGSITLDGVDIKDLNVGWLRRQIGLVQQEPVLFNDTIYTNVLYGLPPDEIAQMDEEKKRELVRQACIESNADDFIQGFPKGYDTIVGERGSLLSGGQRQRVAIARSIISNPPILLLDEATSALDPTAEAIVQAALDKVSQSRTTVLIAHKLSTVKKADNIIVMNKGQVIEQGTHESLLDTKGQYWSLVNAQSLSLASDDSSSDTDKETDTQPAEILEKHATTKSTHSKVPHEVAAESEDVARKFSLFKCLLIIFYEQRRHWLFFLLGGIASVVSGGAFPAQAILFSRIVTTFQLPRDQWQEKGDFWALMFFVLALCILLTYASIGFFLTVAAFRSSKFYRSEYFKAMISQDIAYFDKPANSSGSLTARLSTDPQNLQDLLSSNIGLILIVIVSLLAVSLLALVTGWKLALVSLFGCLPPLFLAGFIRMRMEMQAQDKNAKLYLESARFASEAVNSIRTVSSLTLESTVYNNYGDRLKRPVARSLKYTAIAMIFFGFSDSVDTAAMALAFWYGGRLMSYGEYDAQQFFVIFIAVIFGGQAAGFIFGFTMNTTKAHAAANHIIHLRGQVAPINGSTGEEPASTEDSDVAVEFRNVSFSYPTRPDQPVLRKINLNIRHGQNVGLVGPSGCGKTTMIALLERFYDVTSGDILINGKPLTDIDVTKYRETASLVSQETTLYQGTIRENILLGVTRDVPDEEIHQACKDANIHDFIISLPEGYNTEAGSRGLSFSGGQRQRLATARALLRNPDFLFLDEATSALDTESERVVQAALEHAKRGRTTIAVAHRLSTVQDCDAIFVLEAGKIVEQGTHQELLRRKGRYFEMCKAQSLDREA.

The segment at 1 to 43 (MTEEPKPVTPVLRDGEAGLDTTAPTEAGSLGEEAPKKEADGIV) is disordered. 2 helical membrane passes run 79-99 (ICGFFAAVASGTALPLMTIIF) and 128-148 (LWFVYLFIGKFALVYIHTICF). The ABC transmembrane type-1 1 domain occupies 81–370 (GFFAAVASGT…IAPTLGEFTK (290 aa)). Asn149 is a glycosylation site (N-linked (GlcNAc...) asparagine). Helical transmembrane passes span 202–222 (VGTCCQGVAMLISAFVVAFTQ), 226–246 (LTLPVATSIPTAVTLVGITVA), 314–334 (EFFIMYCAYALAFWYGIKLLL), and 344–364 (ILTVLFSIVIGTSSLTMIAPT). One can recognise an ABC transporter 1 domain in the interval 405–650 (LELSNAVFSY…KGQYWSLVNA (246 aa)). 440–447 (GASGSGKS) is an ATP binding site. Asn494 carries N-linked (GlcNAc...) asparagine glycosylation. The segment at 656–691 (ASDDSSSDTDKETDTQPAEILEKHATTKSTHSKVPH) is disordered. Over residues 663–680 (DTDKETDTQPAEILEKHA) the composition is skewed to basic and acidic residues. The next 2 helical transmembrane spans lie at 720-740 (HWLFFLLGGIASVVSGGAFPA) and 768-788 (LMFFVLALCILLTYASIGFFL). The 288-residue stretch at 725–1012 (LLGGIASVVS…IFGFTMNTTK (288 aa)) folds into the ABC transmembrane type-1 2 domain. An N-linked (GlcNAc...) asparagine glycan is attached at Asn820. 4 consecutive transmembrane segments (helical) span residues 844–864 (IGLILIVIVSLLAVSLLALVT), 866–886 (WKLALVSLFGCLPPLFLAGFI), 949–969 (IAMIFFGFSDSVDTAAMALAF), and 986–1006 (FFVIFIAVIFGGQAAGFIFGF). N-linked (GlcNAc...) asparagine glycans are attached at residues Asn1009, Asn1031, and Asn1052. Residues 1048–1285 (VEFRNVSFSY…KGRYFEMCKA (238 aa)) form the ABC transporter 2 domain. Position 1083–1090 (1083–1090 (GPSGCGKT)) interacts with ATP.

This sequence belongs to the ABC transporter superfamily. ABCB family. Multidrug resistance exporter (TC 3.A.1.201) subfamily.

It localises to the cell membrane. It carries out the reaction itraconazole(in) + ATP + H2O = itraconazole(out) + ADP + phosphate + H(+). Functionally, pleiotropic ABC efflux transporter involved in the modulation susceptibility to itraconazole. The sequence is that of ABC multidrug transporter MDR5 from Trichophyton rubrum (strain ATCC MYA-4607 / CBS 118892) (Athlete's foot fungus).